Here is a 574-residue protein sequence, read N- to C-terminus: Avenacosidase 1 (574 aa).

The transit peptide at 1–55 (MALLCSALSNSTHPSFRSHIGANSENLWHLSADPAQKSKRRCNLTLSSRAARISS) directs the protein to the chloroplast. Residues Q88, H192, and 237 to 238 (NE) each bind a beta-D-glucoside. E238 serves as the catalytic Proton donor. Cysteines 258 and 264 form a disulfide. A beta-D-glucoside is bound by residues Y381, E454, W505, 512 to 513 (EW), and F521. The Nucleophile role is filled by E454.

It belongs to the glycosyl hydrolase 1 family. In terms of assembly, homo- and heteromultimer with P60B in a 1:1 stoichiometry. Aggregates to form the fibrillar stromacentre. Expressed in caryopses, coleoptiles, primary leaves, and etiolated and green seedlings, but not in roots.

It localises to the plastid. The protein localises to the chloroplast stroma. It catalyses the reaction avenacoside B + H2O = 26-desgluco-avenacoside B + D-glucose. Its activity is regulated as follows. Inhibited by N-(3-Dimethylaminopropyl)-N'-ethylcarbodiimide hydrochloride (EDC). Beta-glucosidase acting as a preformed defense system. Hydrolyzes the bisdesmosides avenacosides A and B to 26-desgluco-avenacosides exhibiting fungicidal activity. Can use beta-fucoside &gt; beta-glucoside &gt; beta-galactoside &gt; beta-xyloside as substrates, but not alpha-glycosides, beta-thioglucosides and disaccharides. The sequence is that of Avenacosidase 1 (P60A) from Avena sativa (Oat).